A 67-amino-acid chain; its full sequence is Large ribosomal subunit protein bL35 (67 aa).

Positions 1–32 are enriched in basic residues; it reads MPKLKNHSGAKKRFAKTATGKYKRRKAGRKHL. Residues 1-54 are disordered; that stretch reads MPKLKNHSGAKKRFAKTATGKYKRRKAGRKHLLTPQSGSRKREMRQTGIIKPES.

Belongs to the bacterial ribosomal protein bL35 family.

This is Large ribosomal subunit protein bL35 from Elusimicrobium minutum (strain Pei191).